Consider the following 250-residue polypeptide: 5-oxoprolinase subunit A (250 aa).

This sequence belongs to the LamB/PxpA family. Forms a complex composed of PxpA, PxpB and PxpC.

The catalysed reaction is 5-oxo-L-proline + ATP + 2 H2O = L-glutamate + ADP + phosphate + H(+). In terms of biological role, catalyzes the cleavage of 5-oxoproline to form L-glutamate coupled to the hydrolysis of ATP to ADP and inorganic phosphate. The sequence is that of 5-oxoprolinase subunit A from Streptomyces coelicolor (strain ATCC BAA-471 / A3(2) / M145).